The primary structure comprises 457 residues: Ribosomal RNA-processing protein 8 (457 aa).

Residues 47–237 are disordered; that stretch reads LEAASLSQQT…KSDSQESRAG (191 aa). Positions 51-61 are enriched in polar residues; sequence SLSQQTPSLPG. 3 positions are modified to phosphoserine: Ser-62, Ser-64, and Ser-105. Residues 129 to 138 are compositionally biased toward basic and acidic residues; sequence GEEKGKRKCQ. The segment covering 139-183 has biased composition (polar residues); it reads EYSSLHLTQPLDSVDQTVHNSRTSTATIDPSKPSPESMSPNSSHT. Phosphoserine occurs at positions 172 and 177. Basic residues predominate over residues 184–203; it reads LSRKQWRNRQKNKRRHKNKF. S-adenosyl-L-methionine-binding residues include His-282, Gly-317, Asp-335, Asp-347, Met-348, and Cys-364.

It belongs to the methyltransferase superfamily. RRP8 family. Component of the eNoSC complex, composed of SIRT1, SUV39H1 and RRP8.

Its subcellular location is the nucleus. The protein resides in the nucleolus. Its function is as follows. Essential component of the eNoSC (energy-dependent nucleolar silencing) complex, a complex that mediates silencing of rDNA in response to intracellular energy status and acts by recruiting histone-modifying enzymes. The eNoSC complex is able to sense the energy status of cell: upon glucose starvation, elevation of NAD(+)/NADP(+) ratio activates SIRT1, leading to histone H3 deacetylation followed by dimethylation of H3 at 'Lys-9' (H3K9me2) by SUV39H1 and the formation of silent chromatin in the rDNA locus. In the complex, RRP8 binds to H3K9me2 and probably acts as a methyltransferase. Its substrates are however unknown. The chain is Ribosomal RNA-processing protein 8 (Rrp8) from Mus musculus (Mouse).